We begin with the raw amino-acid sequence, 817 residues long: DNA mismatch repair protein MutS (817 aa).

Residue 604–611 (GPNMSGKS) participates in ATP binding.

Belongs to the DNA mismatch repair MutS family.

Its function is as follows. This protein is involved in the repair of mismatches in DNA. It is possible that it carries out the mismatch recognition step. This protein has a weak ATPase activity. The protein is DNA mismatch repair protein MutS of Petrotoga mobilis (strain DSM 10674 / SJ95).